A 684-amino-acid chain; its full sequence is Coiled-coil domain-containing protein 62 (684 aa).

Coiled coils occupy residues 11–160 and 199–322; these read RQNI…QALT and TCIV…ESKA. Positions 579 to 603 are disordered; it reads SLGSSKSALREDETESSSNKKNSPT. A compositionally biased stretch (polar residues) spans 594–603; it reads SSSNKKNSPT. Short sequence motifs (LXXLL motif) lie at residues 634-638 and 650-654; these read LQRLL and LSTLL. Residues 657–684 are disordered; that stretch reads SHENLTGSATNKSEVPEESAQKNTFVSY. Residues 659–669 show a composition bias toward polar residues; it reads ENLTGSATNKS.

In terms of assembly, interacts with ESR1 and ESR2 in the presence of estradiol/E2. The interaction with ESR2 recruits CCDC62 to ER target genes, including cyclin-D1/CCND1 AP-1 promoter. Interacts with GOPC. Highly expressed in adult testis. Expressed in both prostate epithelial and stromal cells, with predominant expression in epithelial cells (at protein level). Not detected in prostate by RT-PCR. Overexpressed in various cancers.

It localises to the cytoplasm. The protein resides in the nucleus. The protein localises to the cytoplasmic vesicle. It is found in the secretory vesicle. Its subcellular location is the acrosome. In terms of biological role, nuclear receptor coactivator that can enhance preferentially estrogen receptors ESR1 and ESR2 transactivation. Also modulates progesterone/PGR, glucocorticoid/NR3C1 and androgen/AR receptors transactivation, although at lower level; little effect on vitamin D receptor/VDR. Required for normal spermiogenesis. It probably plays a role in acrosome formation. This chain is Coiled-coil domain-containing protein 62 (CCDC62), found in Homo sapiens (Human).